The sequence spans 478 residues: 2-succinylbenzoate--CoA ligase (478 aa).

This sequence belongs to the ATP-dependent AMP-binding enzyme family. MenE subfamily.

The enzyme catalyses 2-succinylbenzoate + ATP + CoA = 2-succinylbenzoyl-CoA + AMP + diphosphate. It participates in quinol/quinone metabolism; 1,4-dihydroxy-2-naphthoate biosynthesis; 1,4-dihydroxy-2-naphthoate from chorismate: step 5/7. Its pathway is quinol/quinone metabolism; menaquinone biosynthesis. Functionally, converts 2-succinylbenzoate (OSB) to 2-succinylbenzoyl-CoA (OSB-CoA). This is 2-succinylbenzoate--CoA ligase from Bacillus licheniformis (strain ATCC 14580 / DSM 13 / JCM 2505 / CCUG 7422 / NBRC 12200 / NCIMB 9375 / NCTC 10341 / NRRL NRS-1264 / Gibson 46).